The sequence spans 477 residues: UDP-N-acetylmuramate--L-alanine ligase (477 aa).

112–118 (GTHGKTT) serves as a coordination point for ATP.

The protein belongs to the MurCDEF family.

The protein localises to the cytoplasm. The enzyme catalyses UDP-N-acetyl-alpha-D-muramate + L-alanine + ATP = UDP-N-acetyl-alpha-D-muramoyl-L-alanine + ADP + phosphate + H(+). The protein operates within cell wall biogenesis; peptidoglycan biosynthesis. Functionally, cell wall formation. The sequence is that of UDP-N-acetylmuramate--L-alanine ligase from Cupriavidus necator (strain ATCC 17699 / DSM 428 / KCTC 22496 / NCIMB 10442 / H16 / Stanier 337) (Ralstonia eutropha).